Here is a 241-residue protein sequence, read N- to C-terminus: Ribulose-phosphate 3-epimerase 2 (241 aa).

Serine 21 is a binding site for substrate. The a divalent metal cation site is built by histidine 46, aspartate 48, and histidine 79. Residue aspartate 48 is the Proton acceptor of the active site. Substrate-binding positions include histidine 79, 155 to 158 (GFGG), 192 to 194 (DGG), and 214 to 215 (GS). Aspartate 192 serves as a coordination point for a divalent metal cation. Aspartate 192 acts as the Proton donor in catalysis.

This sequence belongs to the ribulose-phosphate 3-epimerase family. Requires a divalent metal cation as cofactor.

It catalyses the reaction D-ribulose 5-phosphate = D-xylulose 5-phosphate. The protein operates within carbohydrate degradation. Functionally, catalyzes the reversible epimerization of D-ribulose 5-phosphate to D-xylulose 5-phosphate. The chain is Ribulose-phosphate 3-epimerase 2 from Cupriavidus necator (strain ATCC 17699 / DSM 428 / KCTC 22496 / NCIMB 10442 / H16 / Stanier 337) (Ralstonia eutropha).